The sequence spans 250 residues: DNA repair protein RecO (250 aa).

It belongs to the RecO family.

Its function is as follows. Involved in DNA repair and RecF pathway recombination. The chain is DNA repair protein RecO from Lactobacillus helveticus (strain DPC 4571).